The chain runs to 419 residues: Protein translocase subunit SecY (419 aa).

10 consecutive transmembrane segments (helical) span residues 19-39 (IMIL…ITEV), 64-84 (VISI…AVQF), 113-133 (ILTV…LRSF), 143-163 (FVVA…SEVI), 167-189 (GIGN…FLIN), 202-222 (SNLY…FSTL), 255-275 (FGQA…FLTT), 299-319 (IFYF…YTLI), 359-379 (FVGS…AAAL), and 380-400 (GVHP…SIIN).

It belongs to the SecY/SEC61-alpha family. Component of the plastid Sec protein translocase complex, which is composed of at least SecY and SecE.

The protein localises to the plastid. It localises to the chloroplast thylakoid membrane. The central subunit of the protein translocation channel SecYE. Consists of two halves formed by TMs 1-5 and 6-10. These two domains form a lateral gate at the front which open onto the bilayer between TMs 2 and 7, and are clamped together by SecE at the back. The channel is closed by both a pore ring composed of hydrophobic SecY resides and a short helix (helix 2A) on the extracellular side of the membrane which forms a plug. The protein is Protein translocase subunit SecY of Diacronema lutheri (Unicellular marine alga).